A 612-amino-acid chain; its full sequence is BTB/POZ domain-containing protein 9 (612 aa).

The BTB domain maps to 36–104; it reads GDVTFVVEKK…IYTGRATLTD (69 aa). The 99-residue stretch at 142 to 240 folds into the BACK domain; sequence VCMTFDVASL…SLTELLNVVR (99 aa). The disordered stretch occupies residues 559–612; that stretch reads QQSNQKEDSSEEPGTGDPSTPNQQLDPHAPRAPSASSLPPSPGPNSRSPNQQNQ. Positions 589–612 are enriched in low complexity; it reads RAPSASSLPPSPGPNSRSPNQQNQ.

Expressed in the brain (at protein level).

This is BTB/POZ domain-containing protein 9 (Btbd9) from Mus musculus (Mouse).